Here is an 872-residue protein sequence, read N- to C-terminus: Cyanophycin synthetase (872 aa).

The 257-residue stretch at 224–480 (KTILQDAGVP…VAAPVMDMLF (257 aa)) folds into the ATP-grasp domain. 495-501 (GTNGKTT) is an ATP binding site.

In the C-terminal section; belongs to the MurCDEF family. Homodimer.

The catalysed reaction is [L-4-(L-arginin-2-N-yl)aspartate](n) + L-aspartate + ATP = [L-4-(L-arginin-2-N-yl)aspartate](n)-L-aspartate + ADP + phosphate + H(+). The enzyme catalyses [L-4-(L-arginin-2-N-yl)aspartate](n)-L-aspartate + L-arginine + ATP = [L-4-(L-arginin-2-N-yl)aspartate](n+1) + ADP + phosphate + H(+). Functionally, catalyzes the ATP-dependent polymerization of arginine and aspartate to multi-L-arginyl-poly-L-aspartic acid (cyanophycin; a water-insoluble reserve polymer). This chain is Cyanophycin synthetase (cphA), found in Crocosphaera subtropica (strain ATCC 51142 / BH68) (Cyanothece sp. (strain ATCC 51142)).